The sequence spans 355 residues: Zinc finger protein CONSTANS-LIKE 1 (355 aa).

Zn(2+) is bound by residues C12, C15, C35, H40, C55, C58, C78, and H83. The segment at 12-54 adopts a B box-type 1; atypical zinc-finger fold; sequence CDTCRSAACTVYCRADSAYLCSSCDAQVHAANRLASRHERVRV. The B box-type 2; atypical zinc finger occupies 55–97; sequence CQSCERAPAAFFCKADAASLCTTCDSEIHSANPLARRHQRVPI. Over residues 252 to 264 the composition is skewed to polar residues; sequence ESTTSDATVSNPR. The segment at 252-281 is disordered; it reads ESTTSDATVSNPRSPKAVTDQPPYPPAQML. Residues 286-328 form the CCT domain; sequence REARVLRYREKKKMRKFEKTIRYASRKAYAEKRPRIKGRFAKK.

The protein belongs to the CONSTANS family. As to expression, highly expressed in leaves and at lower levels in stems, flowers and siliques. Not detected in roots.

It localises to the nucleus. In terms of biological role, putative transcription factor that may be involved in the light input to the circadian clock but does not affect flowering time. The chain is Zinc finger protein CONSTANS-LIKE 1 (COL1) from Arabidopsis thaliana (Mouse-ear cress).